The sequence spans 74 residues: Guanine nucleotide-binding protein G(T) subunit gamma-T1 (74 aa).

Cysteine methyl ester is present on Cys71. Residue Cys71 is the site of S-farnesyl cysteine attachment. A propeptide spans 72-74 (VIS) (removed in mature form).

Belongs to the G protein gamma family. In terms of assembly, g proteins are composed of 3 units, alpha, beta and gamma. As to expression, retinal rod outer segment.

It localises to the cell membrane. Its function is as follows. Guanine nucleotide-binding proteins (G proteins) are involved as a modulator or transducer in various transmembrane signaling systems. The beta and gamma chains are required for the GTPase activity, for replacement of GDP by GTP, and for G protein-effector interaction. This Mus musculus (Mouse) protein is Guanine nucleotide-binding protein G(T) subunit gamma-T1 (Gngt1).